The primary structure comprises 218 residues: METRESTESSPGKHLVTSEELISEGKWVKFEKTTYMDPTGKTRTWETVKLTTRKGKSADAVSVIPVLQRTLHHECVILVKQFRPPMGSYCLEFPAGFIEDGESPEAAALRELEEETGYKGEVAECSPAVCMDPGLSNCTTHVVTVTINGDDAGNVRPKPKPGDGEFMEVISLPKNDLLTRLDALGAEQHLTVDAKVYAYGLALKHANSKPFEVPFLKF.

The residue at position 1 (Met1) is an N-acetylmethionine. The residue at position 10 (Ser10) is a Phosphoserine. Trp27 lines the substrate pocket. Residue Lys41 forms a Glycyl lysine isopeptide (Lys-Gly) (interchain with G-Cter in SUMO2) linkage. The residue at position 44 (Thr44) is a Phosphothreonine. Substrate contacts are provided by residues 45-46 (WE) and Arg83. Residues 56 to 196 (KSADAVSVIP…EQHLTVDAKV (141 aa)) form the Nudix hydrolase domain. Residue Ala95 participates in Mg(2+) binding. The Nudix box motif lies at 96–117 (GFIEDGESPEAAALRELEEETG). Position 97 (Phe97) interacts with substrate. Residues Glu111 and Glu115 each coordinate Mg(2+). A substrate-binding site is contributed by Asp132. Glu165 lines the Mg(2+) pocket. Lys209 and Lys217 each carry N6-acetyllysine.

It belongs to the Nudix hydrolase family. In terms of assembly, homodimer. Interacts with PARG. The cofactor is Mg(2+). Post-translationally, phosphorylation at Thr-44 is required for homodimer stability; dephosphorylation results in destabilization of the homodimer. Dephosphorylation at Thr-44 promotes the ATP-synthesis activity. In terms of tissue distribution, widely expressed. Most abundant in liver.

It is found in the nucleus. It catalyses the reaction D-ribose 5-phosphate + ATP + H(+) = ADP-D-ribose + diphosphate. It carries out the reaction ADP-D-ribose + H2O = D-ribose 5-phosphate + AMP + 2 H(+). The enzyme catalyses 8-oxo-dGDP + H2O = 8-oxo-dGMP + phosphate + H(+). Enzyme that can either act as an ADP-sugar pyrophosphatase in absence of diphosphate or catalyze the synthesis of ATP in presence of diphosphate. In absence of diphosphate, hydrolyzes with similar activities various modified nucleoside diphosphates such as ADP-ribose, ADP-mannose, ADP-glucose, 8-oxo-GDP and 8-oxo-dGDP. Can also hydrolyze other nucleotide sugars with low activity. In presence of diphosphate, mediates the synthesis of ATP in the nucleus by catalyzing the conversion of ADP-ribose to ATP and ribose 5-phosphate. Nuclear ATP synthesis takes place when dephosphorylated at Thr-44. Nuclear ATP generation is required for extensive chromatin remodeling events that are energy-consuming. Does not play a role in U8 snoRNA decapping activity. Binds U8 snoRNA. The polypeptide is ADP-sugar pyrophosphatase (Mus musculus (Mouse)).